We begin with the raw amino-acid sequence, 103 residues long: Co-chaperonin GroES (103 aa).

This sequence belongs to the GroES chaperonin family. Heptamer of 7 subunits arranged in a ring. Interacts with the chaperonin GroEL.

The protein resides in the cytoplasm. Functionally, together with the chaperonin GroEL, plays an essential role in assisting protein folding. The GroEL-GroES system forms a nano-cage that allows encapsulation of the non-native substrate proteins and provides a physical environment optimized to promote and accelerate protein folding. GroES binds to the apical surface of the GroEL ring, thereby capping the opening of the GroEL channel. This chain is Co-chaperonin GroES, found in Nostoc punctiforme (strain ATCC 29133 / PCC 73102).